We begin with the raw amino-acid sequence, 330 residues long: ADP-L-glycero-D-manno-heptose-6-epimerase (330 aa).

Residues F11–I12, D32–N33, K39, K54, E75–S79, and N92 each bind NADP(+). Y139 (proton acceptor) is an active-site residue. K143 serves as a coordination point for NADP(+). Substrate is bound at residue N168. NADP(+) contacts are provided by V169 and K177. Residue K177 is the Proton acceptor of the active site. Residues R179, H186, F200–Y203, R213, and Y292 contribute to the substrate site.

Belongs to the NAD(P)-dependent epimerase/dehydratase family. HldD subfamily. In terms of assembly, homopentamer. NADP(+) is required as a cofactor.

The enzyme catalyses ADP-D-glycero-beta-D-manno-heptose = ADP-L-glycero-beta-D-manno-heptose. It participates in nucleotide-sugar biosynthesis; ADP-L-glycero-beta-D-manno-heptose biosynthesis; ADP-L-glycero-beta-D-manno-heptose from D-glycero-beta-D-manno-heptose 7-phosphate: step 4/4. In terms of biological role, catalyzes the interconversion between ADP-D-glycero-beta-D-manno-heptose and ADP-L-glycero-beta-D-manno-heptose via an epimerization at carbon 6 of the heptose. The sequence is that of ADP-L-glycero-D-manno-heptose-6-epimerase from Burkholderia cenocepacia (strain ATCC BAA-245 / DSM 16553 / LMG 16656 / NCTC 13227 / J2315 / CF5610) (Burkholderia cepacia (strain J2315)).